A 452-amino-acid polypeptide reads, in one-letter code: MKVPVSGDVKEETEEENVEQEENQEAKVSLKPVIEDLSMELARKCTELISDIHYKEEYKKSKDKCTFVTDTPMLNHVKNIGAFISEAKYKGTIKADLSNCLYKDMPATIDSVFAREVSQLQSEVAYKQKHEAEKGFSDYTHMKEPPEVRRAMEVNRHQSNISYRKDMQGTHTYTAELDRPDIKKATQISKIISDAEYKKGQGIVNKEPSVIGRPDFEHAVGASKLSSQVKYKEKFDNEMKEKSHHYNPLGSAFFRQHQFAAVLASDWEYKRDFEENKGLYHFDAEAPEHLHHKGNATLQSQVKYREEYEKNKGKSMLEFVETPSYQSSKEAQKMQSEKVYKEDFEKEIKGRSSLDLDKTPAFLHVKHITNLMREKEYKKDLENEIKGKGMELSSEVLDIQRAKRASEMASEKDYKRDLETEIKGKGMQVSTDTLDVQRAKRASEMASQVRMV.

Residues 1 to 26 (MKVPVSGDVKEETEEENVEQEENQEA) are disordered. Positions 11-23 (EETEEENVEQEEN) are enriched in acidic residues. Nebulin repeat units follow at residues 29–63 (SLKP…KSKD), 64–98 (KCTF…ADLS), 101–135 (LYKD…AEKG), 138–172 (DYTH…GTHT), 173–199 (YTAE…EYKK), 206–240 (KEPS…NEMK), 263–278 (LASD…ENKG), 279–313 (LYHF…KNKG), 315–349 (SMLE…KEIK), 352–386 (SSLD…NEIK), 389–423 (GMEL…TEIK), and 426–452 (GMQV…VRMV).

As to quaternary structure, interacts (via nebulin repeats 1-5) with DESM (via rod region). Interacts (via SH3 domain) with XIRP2.

Its subcellular location is the cytoplasm. Binds to actin and plays an important role in the assembly of the Z-disk. May functionally link sarcomeric actin to the desmin intermediate filaments in the heart muscle sarcomeres. Isoform 2 might play a role in the assembly of focal adhesion. The protein is Nebulette (Nebl) of Mus musculus (Mouse).